The chain runs to 160 residues: Cytochrome b6-f complex subunit 4 (160 aa).

Transmembrane regions (helical) follow at residues 36–56 (LLYVFPLTMLGTLTCIVGLSV), 95–115 (LLGVLAMAAVPLGLITVPFIE), and 131–151 (LTFIFGFFTAVWLGIGACVPI).

The protein belongs to the cytochrome b family. PetD subfamily. As to quaternary structure, the 4 large subunits of the cytochrome b6-f complex are cytochrome b6, subunit IV (17 kDa polypeptide, petD), cytochrome f and the Rieske protein, while the 4 small subunits are petG, petL, petM and petN. The complex functions as a dimer.

Its subcellular location is the plastid. It localises to the chloroplast thylakoid membrane. In terms of biological role, component of the cytochrome b6-f complex, which mediates electron transfer between photosystem II (PSII) and photosystem I (PSI), cyclic electron flow around PSI, and state transitions. This Phaeodactylum tricornutum (strain CCAP 1055/1) protein is Cytochrome b6-f complex subunit 4.